The chain runs to 229 residues: 7-cyano-7-deazaguanine synthase (229 aa).

15–25 (LSGGLDSATVV) provides a ligand contact to ATP. Zn(2+)-binding residues include C194, C204, C207, and C210.

This sequence belongs to the QueC family. It depends on Zn(2+) as a cofactor.

It carries out the reaction 7-carboxy-7-deazaguanine + NH4(+) + ATP = 7-cyano-7-deazaguanine + ADP + phosphate + H2O + H(+). It participates in purine metabolism; 7-cyano-7-deazaguanine biosynthesis. Its function is as follows. Catalyzes the ATP-dependent conversion of 7-carboxy-7-deazaguanine (CDG) to 7-cyano-7-deazaguanine (preQ(0)). In Pseudomonas savastanoi pv. phaseolicola (strain 1448A / Race 6) (Pseudomonas syringae pv. phaseolicola (strain 1448A / Race 6)), this protein is 7-cyano-7-deazaguanine synthase.